We begin with the raw amino-acid sequence, 149 residues long: Protein SprT-like (149 aa).

The region spanning 4 to 144 (TDYVKQVSLE…GLCRGKLLLV (141 aa)) is the SprT-like domain. Residue histidine 64 coordinates Zn(2+). The active site involves glutamate 65. Histidine 68 lines the Zn(2+) pocket.

The protein belongs to the SprT family. It depends on Zn(2+) as a cofactor.

It is found in the cytoplasm. The polypeptide is Protein SprT-like (Streptococcus pneumoniae serotype 4 (strain ATCC BAA-334 / TIGR4)).